Reading from the N-terminus, the 199-residue chain is MFSIPPSVRRLVFLFLIAAPLLSIVLPVAAAPAGVDPPSKLQPRAPQPSRRMGATKRSKKIEPLKKKDYSSFLCPGGSVACPIPGDEVSPSSVEALEKSLNSLADWFKVGFECVELETELNSCGGCLALGSGQDCALIENARTTGCENGSCQVYSCFDGYVVSPDRTSCVKRGSTIPATPVTAVNVEEFVADDQLPFGQ.

A signal peptide spans 1–30; the sequence is MFSIPPSVRRLVFLFLIAAPLLSIVLPVAA. The interval 34-58 is disordered; it reads GVDPPSKLQPRAPQPSRRMGATKRS. Residue Asn148 is glycosylated (N-linked (GlcNAc...) asparagine).

It is found in the secreted. In terms of biological role, virulence factor which promotes fungal virulence by enhancing type 2 inflammation in the mouse host. Likely binds mouse Tlr4 independently of Ly96/Md2 and activates Tlr4 signaling to drive Stat3 phosphorylation in interstitial macrophages, which promotes the initial induction of Arg1/arginase-1 and increases macrophage sensitivity to Il4 signaling. The chain is Protein CPL1 from Cryptococcus neoformans var. grubii serotype A (strain H99 / ATCC 208821 / CBS 10515 / FGSC 9487) (Filobasidiella neoformans var. grubii).